Consider the following 376-residue polypeptide: Biotin synthase (376 aa).

The 225-residue stretch at 68–292 (NEVQISTLLS…IAVTRICCPS (225 aa)) folds into the Radical SAM core domain. 3 residues coordinate [4Fe-4S] cluster: Cys-83, Cys-87, and Cys-90. 4 residues coordinate [2Fe-2S] cluster: Cys-129, Cys-160, Cys-220, and Arg-296.

Belongs to the radical SAM superfamily. Biotin synthase family. As to quaternary structure, homodimer. Requires [4Fe-4S] cluster as cofactor. [2Fe-2S] cluster is required as a cofactor.

The enzyme catalyses (4R,5S)-dethiobiotin + (sulfur carrier)-SH + 2 reduced [2Fe-2S]-[ferredoxin] + 2 S-adenosyl-L-methionine = (sulfur carrier)-H + biotin + 2 5'-deoxyadenosine + 2 L-methionine + 2 oxidized [2Fe-2S]-[ferredoxin]. The protein operates within cofactor biosynthesis; biotin biosynthesis; biotin from 7,8-diaminononanoate: step 2/2. Functionally, catalyzes the conversion of dethiobiotin (DTB) to biotin by the insertion of a sulfur atom into dethiobiotin via a radical-based mechanism. The polypeptide is Biotin synthase (Psychrobacter cryohalolentis (strain ATCC BAA-1226 / DSM 17306 / VKM B-2378 / K5)).